The sequence spans 467 residues: tRNA-2-methylthio-N(6)-dimethylallyladenosine synthase (467 aa).

One can recognise an MTTase N-terminal domain in the interval 4 to 124 (RKLFIKSYGC…LPEMVAKVER (121 aa)). The [4Fe-4S] cluster site is built by cysteine 13, cysteine 49, cysteine 87, cysteine 161, cysteine 165, and cysteine 168. The 233-residue stretch at 147-379 (QAHGPSAFLS…QARLVEIQQA (233 aa)) folds into the Radical SAM core domain. The TRAM domain maps to 382-444 (QACVGRPMDV…SNSLAARLVE (63 aa)).

Belongs to the methylthiotransferase family. MiaB subfamily. As to quaternary structure, monomer. [4Fe-4S] cluster is required as a cofactor.

The protein localises to the cytoplasm. The enzyme catalyses N(6)-dimethylallyladenosine(37) in tRNA + (sulfur carrier)-SH + AH2 + 2 S-adenosyl-L-methionine = 2-methylsulfanyl-N(6)-dimethylallyladenosine(37) in tRNA + (sulfur carrier)-H + 5'-deoxyadenosine + L-methionine + A + S-adenosyl-L-homocysteine + 2 H(+). In terms of biological role, catalyzes the methylthiolation of N6-(dimethylallyl)adenosine (i(6)A), leading to the formation of 2-methylthio-N6-(dimethylallyl)adenosine (ms(2)i(6)A) at position 37 in tRNAs that read codons beginning with uridine. The polypeptide is tRNA-2-methylthio-N(6)-dimethylallyladenosine synthase (Rhodospirillum rubrum (strain ATCC 11170 / ATH 1.1.1 / DSM 467 / LMG 4362 / NCIMB 8255 / S1)).